Here is a 170-residue protein sequence, read N- to C-terminus: ATP synthase subunit b (170 aa).

A helical transmembrane segment spans residues 30-50 (FFFVLAIFLVVLAVIGTFVVP).

The protein belongs to the ATPase B chain family. As to quaternary structure, F-type ATPases have 2 components, F(1) - the catalytic core - and F(0) - the membrane proton channel. F(1) has five subunits: alpha(3), beta(3), gamma(1), delta(1), epsilon(1). F(0) has three main subunits: a(1), b(2) and c(10-14). The alpha and beta chains form an alternating ring which encloses part of the gamma chain. F(1) is attached to F(0) by a central stalk formed by the gamma and epsilon chains, while a peripheral stalk is formed by the delta and b chains.

It localises to the cell membrane. Its function is as follows. F(1)F(0) ATP synthase produces ATP from ADP in the presence of a proton or sodium gradient. F-type ATPases consist of two structural domains, F(1) containing the extramembraneous catalytic core and F(0) containing the membrane proton channel, linked together by a central stalk and a peripheral stalk. During catalysis, ATP synthesis in the catalytic domain of F(1) is coupled via a rotary mechanism of the central stalk subunits to proton translocation. Component of the F(0) channel, it forms part of the peripheral stalk, linking F(1) to F(0). This chain is ATP synthase subunit b, found in Mycobacterium ulcerans (strain Agy99).